An 866-amino-acid polypeptide reads, in one-letter code: Phospholipase D gamma 3 (866 aa).

In terms of domain architecture, C2 spans 31–170; sequence PFDTSSGSLR…CSGNRIEGLF (140 aa). Asp-232 provides a ligand contact to Ca(2+). The PLD phosphodiesterase 1 domain occupies 371-406; it reads TIYTHHQKTMIVDAEAAQNRRKIVAFVGGLDLCNGR. Active-site residues include His-376, Lys-378, and Asp-383. Residue His-376 coordinates a 1,2-diacyl-sn-glycero-3-phosphate. Residues His-412 and His-444 each contribute to the Ca(2+) site. An a 1,2-diacyl-sn-glycero-3-phosphate-binding site is contributed by Gln-572. Position 692 is a phosphoserine (Ser-692). The 28-residue stretch at 712-739 folds into the PLD phosphodiesterase 2 domain; it reads FMIYVHSKGMVVDDEFVLIGSANINQRS. Catalysis depends on residues His-717, Lys-719, and Asp-724. His-717 lines the a 1,2-diacyl-sn-glycero-3-phosphate pocket. Residue Glu-780 participates in Ca(2+) binding.

The protein belongs to the phospholipase D family. C2-PLD subfamily. It depends on Ca(2+) as a cofactor. In terms of tissue distribution, highly expressed in inflorescences and old leaves, moderately in stems, roots, siliques and young leaves and low in flowers.

Its subcellular location is the cytoplasm. The protein localises to the membrane. The catalysed reaction is a 1,2-diacyl-sn-glycero-3-phosphocholine + H2O = a 1,2-diacyl-sn-glycero-3-phosphate + choline + H(+). Its activity is regulated as follows. Inhibited by neomycin. Its function is as follows. Hydrolyzes glycerol-phospholipids at the terminal phosphodiesteric bond to generate phosphatidic acids (PA). Plays an important role in various cellular processes, including phytohormone action, vesicular trafficking, secretion, cytoskeletal arrangement, meiosis, tumor promotion, pathogenesis, membrane deterioration and senescence. Can use phosphatidylserine but prefers ethanolamine-containing lipids as substrates. The sequence is that of Phospholipase D gamma 3 from Arabidopsis thaliana (Mouse-ear cress).